The primary structure comprises 264 residues: MVKSHIGSWILVLFVAMWSDVALCKKRPKPGGGWNTGGSRYPGQGSPGGNRYPSQGGGGWGQPHGGGWGQPHGGGWGQPHGGGWGQPHGGGWGQPHGGGGWGQGGTHGQWNKPSKPKTNMKHVAGAAAAGAVVGGLGGYMLGSAMSRPLIHFGSDYEDRYYRENMYRYPNQVYYRPVDQYSNQNNFVHDCVNITVKQHTVTTTTKGENFTETDIKMMERVVEQMCITQYQRESEAYYQRGASVILFSSPPVILLISFLIFLIVG.

The first 24 residues, 1 to 24, serve as a signal peptide directing secretion; sequence MVKSHIGSWILVLFVAMWSDVALC. Residues 25–241 are interaction with GRB2, ERI3 and SYN1; the sequence is KKRPKPGGGW…ESEAYYQRGA (217 aa). Residues 28-118 are disordered; the sequence is PKPGGGWNTG…QWNKPSKPKT (91 aa). Repeat copies occupy residues 54–62, 63–70, 71–78, 79–86, 87–94, and 95–103. Positions 54–103 are 6 X 8 AA tandem repeats of P-H-G-G-G-W-G-Q; sequence SQGGGGWGQPHGGGWGQPHGGGWGQPHGGGWGQPHGGGWGQPHGGGGWGQ. The segment covering 55–107 has biased composition (gly residues); the sequence is QGGGGWGQPHGGGWGQPHGGGWGQPHGGGWGQPHGGGWGQPHGGGGWGQGGTH. The Cu(2+) site is built by His72, Gly73, Gly74, His80, Gly81, Gly82, His88, Gly89, Gly90, His96, Gly98, and Gly99. A disulfide bridge links Cys190 with Cys225. N-linked (GlcNAc...) asparagine glycosylation is found at Asn192 and Asn208. Ala241 carries the GPI-anchor amidated alanine lipid modification. Residues 242 to 264 constitute a propeptide, removed in mature form; the sequence is SVILFSSPPVILLISFLIFLIVG.

Belongs to the prion family. Monomer and homodimer. Has a tendency to aggregate into amyloid fibrils containing a cross-beta spine, formed by a steric zipper of superposed beta-strands. Soluble oligomers may represent an intermediate stage on the path to fibril formation. Copper binding may promote oligomerization. Interacts with GRB2, APP, ERI3/PRNPIP and SYN1. Mislocalized cytosolically exposed PrP interacts with MGRN1; this interaction alters MGRN1 subcellular location and causes lysosomal enlargement. Interacts with KIAA1191.

Its subcellular location is the cell membrane. The protein localises to the golgi apparatus. Functionally, its primary physiological function is unclear. Has cytoprotective activity against internal or environmental stresses. May play a role in neuronal development and synaptic plasticity. May be required for neuronal myelin sheath maintenance. May play a role in iron uptake and iron homeostasis. Soluble oligomers are toxic to cultured neuroblastoma cells and induce apoptosis (in vitro). Association with GPC1 (via its heparan sulfate chains) targets PRNP to lipid rafts. Also provides Cu(2+) or Zn(2+) for the ascorbate-mediated GPC1 deaminase degradation of its heparan sulfate side chains. This chain is Major prion protein 1, found in Tragelaphus strepsiceros (Greater kudu).